Here is a 266-residue protein sequence, read N- to C-terminus: NAD-capped RNA hydrolase NudC (266 aa).

A substrate-binding site is contributed by Arg74. Residues Cys103, Cys106, Cys121, and Cys124 each coordinate Zn(2+). Substrate is bound at residue Tyr129. The 124-residue stretch at 130–253 (PRVSPCIIVA…TIARVLIDET (124 aa)) folds into the Nudix hydrolase domain. Residues Ala163, Glu179, and Glu183 each contribute to the a divalent metal cation site. The Nudix box signature appears at 164 to 185 (GFVEAGETLEQCVAREVEEETG). 197–204 (QPWAFPSN) lines the substrate pocket. Glu224 is an a divalent metal cation binding site. A substrate-binding site is contributed by Ala246.

This sequence belongs to the Nudix hydrolase family. NudC subfamily. In terms of assembly, homodimer. Requires Mg(2+) as cofactor. Mn(2+) serves as cofactor. It depends on Zn(2+) as a cofactor.

It catalyses the reaction a 5'-end NAD(+)-phospho-ribonucleoside in mRNA + H2O = a 5'-end phospho-adenosine-phospho-ribonucleoside in mRNA + beta-nicotinamide D-ribonucleotide + 2 H(+). The enzyme catalyses NAD(+) + H2O = beta-nicotinamide D-ribonucleotide + AMP + 2 H(+). The catalysed reaction is NADH + H2O = reduced beta-nicotinamide D-ribonucleotide + AMP + 2 H(+). Functionally, mRNA decapping enzyme that specifically removes the nicotinamide adenine dinucleotide (NAD) cap from a subset of mRNAs by hydrolyzing the diphosphate linkage to produce nicotinamide mononucleotide (NMN) and 5' monophosphate mRNA. The NAD-cap is present at the 5'-end of some mRNAs and stabilizes RNA against 5'-processing. Has preference for mRNAs with a 5'-end purine. Catalyzes the hydrolysis of a broad range of dinucleotide pyrophosphates. This chain is NAD-capped RNA hydrolase NudC, found in Photobacterium profundum (strain SS9).